Consider the following 220-residue polypeptide: Small ribosomal subunit protein mS42 (220 aa).

It belongs to the mitochondrion-specific ribosomal protein mS42 family. In terms of assembly, component of the mitochondrial small ribosomal subunit (mt-SSU). Mature yeast 74S mitochondrial ribosomes consist of a small (37S) and a large (54S) subunit. The 37S small subunit contains a 15S ribosomal RNA (15S mt-rRNA) and at least 32 different proteins. The 54S large subunit contains a 21S rRNA (21S mt-rRNA) and at least 45 different proteins. mS43 forms a dimer with mS42, building a large protuberance adjacent to the mRNA channel exit in the mt-SSU body.

The protein resides in the mitochondrion. Functionally, component of the mitochondrial ribosome (mitoribosome), a dedicated translation machinery responsible for the synthesis of mitochondrial genome-encoded proteins, including at least some of the essential transmembrane subunits of the mitochondrial respiratory chain. The mitoribosomes are attached to the mitochondrial inner membrane and translation products are cotranslationally integrated into the membrane. This is Small ribosomal subunit protein mS42 from Schizosaccharomyces pombe (strain 972 / ATCC 24843) (Fission yeast).